The chain runs to 1151 residues: ATP-dependent RNA helicase ddx46 (1151 aa).

2 stretches are compositionally biased toward basic and acidic residues: residues 1–26 and 35–51; these read MDEY…DNRN and YRDD…DRSH. Disordered stretches follow at residues 1–138, 166–224, 287–358, and 424–449; these read MDEY…SRFD, MYQQ…VFQQ, QELK…PLVN, and TSQM…DKTI. Over residues 52 to 73 the composition is skewed to low complexity; that stretch reads YNNNNNNNNNNNNNNNNNNGNG. Polar residues predominate over residues 81 to 90; sequence SSQNKYQNHH. Composition is skewed to low complexity over residues 91–124, 166–199, 207–224, and 291–339; these read QQSP…QPHI, MYQQ…FQHH, QPPV…VFQQ, and ASGS…TTSP. A compositionally biased stretch (acidic residues) spans 428–443; that stretch reads IDDDEKLEEESEGEDD. Residues 509 to 537 carry the Q motif motif; it reads QSWAQAGLTEKVHLLLKKFQYEKPTSIQA. Residues 540-718 form the Helicase ATP-binding domain; it reads IPAIMNGRDL…KKILNKPLEI (179 aa). 553 to 560 contacts ATP; sequence ARTGSGKT. The short motif at 666 to 669 is the DEAD box element; that stretch reads DEAD. Residues 729 to 890 enclose the Helicase C-terminal domain; that stretch reads DIEQFVEVRP…KVPDELRKLN (162 aa). Residues 904-972 are disordered; sequence LLAPTGFTGR…EKEKQLLSEK (69 aa). Over residues 915–930 the composition is skewed to basic and acidic residues; that stretch reads HKFDAAEEDKKNIERK. A compositionally biased stretch (acidic residues) spans 938–948; that stretch reads IEEEEEEEDED. Residues 949–972 show a composition bias toward basic and acidic residues; that stretch reads KEKAEKEKLAAASAEKEKQLLSEK.

Belongs to the DEAD box helicase family. DDX46/PRP5 subfamily. In terms of assembly, component of the 17S U2 SnRNP complex, a ribonucleoprotein complex that contains small nuclear RNA (snRNA) U2 and a number of specific proteins.

The protein localises to the nucleus speckle. It carries out the reaction ATP + H2O = ADP + phosphate + H(+). Functionally, component of the 17S U2 SnRNP complex of the spliceosome, a large ribonucleoprotein complex that removes introns from transcribed pre-mRNAs. The sequence is that of ATP-dependent RNA helicase ddx46 (helB1) from Dictyostelium discoideum (Social amoeba).